A 273-amino-acid chain; its full sequence is WIMGHMVDAIAQIDEFVSLGANSIETDVSFDKNANPEYTYHGIPCDCGRTCTKWEYFNTFLGGLRKATTPGDSKYHEKLVLVVFDLKTGSLYDNQAYDAGTKLAKSLLQNYWNKGNNGGRACIVLSIPNLDHYKLITGFKETLTKEEHPELMDKVGYDFSGNDDIGDVAKAYKKAGVTGHVWQSDGITNCLLRGLDRVRKAVANRDSSNGYINKVYYWTVDKRASTRDALDAGVDGIMTNYPDVIADVLSESAYTAKFRIATYDDNPWETFKN.

The active site involves His-5. The Mg(2+) site is built by Glu-25 and Asp-27. Residue His-41 is the Nucleophile of the active site. 2 disulfide bridges follow: Cys-45-Cys-51 and Cys-47-Cys-190. Asp-85 is a Mg(2+) binding site.

This sequence belongs to the arthropod phospholipase D family. Class II subfamily. Mg(2+) serves as cofactor. In terms of tissue distribution, expressed by the venom gland.

It localises to the secreted. The enzyme catalyses an N-(acyl)-sphingosylphosphocholine = an N-(acyl)-sphingosyl-1,3-cyclic phosphate + choline. It carries out the reaction an N-(acyl)-sphingosylphosphoethanolamine = an N-(acyl)-sphingosyl-1,3-cyclic phosphate + ethanolamine. It catalyses the reaction a 1-acyl-sn-glycero-3-phosphocholine = a 1-acyl-sn-glycero-2,3-cyclic phosphate + choline. The catalysed reaction is a 1-acyl-sn-glycero-3-phosphoethanolamine = a 1-acyl-sn-glycero-2,3-cyclic phosphate + ethanolamine. Its function is as follows. Dermonecrotic toxins cleave the phosphodiester linkage between the phosphate and headgroup of certain phospholipids (sphingolipid and lysolipid substrates), forming an alcohol (often choline) and a cyclic phosphate. This toxin acts on sphingomyelin (SM). It may also act on ceramide phosphoethanolamine (CPE), lysophosphatidylcholine (LPC) and lysophosphatidylethanolamine (LPE), but not on lysophosphatidylserine (LPS), and lysophosphatidylglycerol (LPG). It acts by transphosphatidylation, releasing exclusively cyclic phosphate products as second products. Induces dermonecrosis, hemolysis, increased vascular permeability, edema, inflammatory response, and platelet aggregation. In Loxosceles sabina (Tucson recluse spider), this protein is Dermonecrotic toxin LsaSicTox-alphaIB1bii.